The sequence spans 62 residues: Conotoxin reg3.7 (62 aa).

The N-terminal stretch at arginine 1–alanine 15 is a signal peptide. A propeptide spanning residues leucine 16–arginine 45 is cleaved from the precursor. The interval proline 17–asparagine 37 is disordered. 3 disulfide bridges follow: cysteine 46–cysteine 60, cysteine 47–cysteine 58, and cysteine 52–cysteine 61. Cysteine 61 is modified (cysteine amide).

The protein belongs to the conotoxin M superfamily. As to expression, expressed by the venom duct.

Its subcellular location is the secreted. This Conus regius (Crown cone) protein is Conotoxin reg3.7.